The sequence spans 469 residues: Transcriptional coactivator YAP1 (469 aa).

The span at 1 to 21 (MEPAQQPPPQPAPQGPAPPSV) shows a compositional bias: pro residues. Positions 1-47 (MEPAQQPPPQPAPQGPAPPSVSPAGTPAAPPAPPAGHQVVHVRGDSE) are disordered. S46 bears the Phosphoserine mark. T48 carries the post-translational modification Phosphothreonine. Positions 71–85 (MRLRKLPDSFFKPPE) form a coiled coil. K75 carries the N6-lactoyllysine modification. The tract at residues 76–99 (LPDSFFKPPEPKSHSRQASTDAGT) is disordered. Residues S90 and S94 each carry the phosphoserine modification. Phosphothreonine occurs at positions 95 and 104. S112 is modified (phosphoserine; by LATS1 and LATS2). Phosphoserine occurs at positions 113 and 116. At T136 the chain carries Phosphothreonine; by MAPK8 and MAPK9. Position 146 is a phosphoserine; by LATS1 and LATS2 (S146). 2 consecutive WW domains span residues 153–186 (VPLP…DPRK) and 212–245 (GPLP…DPRL). Positions 258–290 (SAPVKQPPPLAPQSPQGGVLGGGSSNQQQQIQL) are disordered. Phosphoserine is present on residues S271 and S320. Residues 273–469 (QGGVLGGGSS…LDKESFLTWL (197 aa)) are transactivation domain. Residues 280–325 (GSSNQQQQIQLQQLQMEKERLRLKQQELFRQELALRSQLPSLEQDG) are a coiled coil. S333 bears the Phosphoserine; by MAPK8 and MAPK9 mark. Residues 345-357 (TNSSDPFLNSGTY) show a composition bias toward polar residues. Positions 345 to 405 (TNSSDPFLNS…SQSTLPSQQS (61 aa)) are disordered. Residues S347, S348, and S354 each carry the phosphoserine modification. At S363 the chain carries Phosphoserine; by LATS1 and LATS2. A compositionally biased stretch (polar residues) spans 365–375 (DSGLSMSSYSI). Residues S366 and S369 each carry the phosphoserine; by CK1 modification. Y373 carries the post-translational modification Phosphotyrosine; by ABL1. A Phosphothreonine; by MAPK8 and MAPK9 modification is found at T378. Residues 393–405 (DTISQSTLPSQQS) are compositionally biased toward polar residues.

Belongs to the YAP1 family. As to quaternary structure, part of a complex when phosphorylated that contains DSG3, PKP1, YAP1 and YWHAG; the complex is required for localization of DSG3 and YAP1 to the cell membrane in keratinocytes. Binds to the SH3 domain of the YES kinase. Binds to WBP1 and WBP2. Binds, in vitro, through the WW1 domain, to neural isoforms of ENAH that contain the PPSY motif. The phosphorylated form interacts with YWHAB. Interacts (via WW domains) with LATS1 (via PPxY motif 2). Interacts with LATS2. Interacts (via WW domain 1) with ERBB4 (via PPxY motif 2). Interacts with TEAD1, TEAD2, TEAD3 and TEAD4. Interacts with TP73. Interacts with RUNX1. Interacts with HCK. Interacts (via WW domains) with PTPN14 (via PPxY motif 2); this interaction leads to the cytoplasmic sequestration of YAP1 and inhibits its transcriptional coactivator activity. Interacts (when phosphorylated at Ser-112) with SMAD2, SMAD3 and WWTR1. Interacts with PRRG2 (via cytoplasmic domain). Interacts (via WW domains) with PRRG4 (via cytoplasmic domain). Interacts (phosphorylated) with CLDN18; the interaction sequesters YAP1 away from the nucleus and thereby restricts transcription of YAP1 target genes. Interacts with SMAD1. Interacts with AMOT; the interaction facilitates translocation of YAP1 to the cytoplasm and tight junctions. Interacts with AMOTL2, the interaction is required for ubiquitination of AMOTL2 and localization of YAP1 to tight junctions. Post-translationally, phosphorylated by LATS1 and LATS2; leading to cytoplasmic translocation and inactivation. Phosphorylated by ABL1; leading to YAP1 stabilization, enhanced interaction with TP73 and recruitment onto proapoptotic genes; in response to DNA damage. Phosphorylation at Ser-366 and Ser-369 by CK1 is triggered by previous phosphorylation at Ser-363 by LATS proteins and leads to YAP1 ubiquitination by SCF(beta-TRCP) E3 ubiquitin ligase and subsequent degradation. Phosphorylated at Thr-104, Thr-136, Ser-333 and Thr-378 by MAPK8/JNK1 and MAPK9/JNK2, which is required for the regulation of apoptosis by YAP1. Lactylation by AARS1 promotes nuclear localization and stabilization of YAP1, leading to increased Hippo signaling pathway. Delactylated by SIRT1. In terms of processing, ubiquitinated by SCF(beta-TRCP) E3 ubiquitin ligase. Highly specific to cortical neurons.

Its subcellular location is the cytoplasm. It is found in the nucleus. The protein resides in the cell junction. It localises to the tight junction. The protein localises to the cell membrane. Its function is as follows. Transcriptional regulator with dual roles as a coactivator and corepressor. Critical downstream regulatory target in the Hippo signaling pathway, crucial for organ size control and tumor suppression by restricting proliferation and promoting apoptosis. The Hippo signaling pathway core involves a kinase cascade featuring STK3/MST2 and STK4/MST1, along with its regulatory partner SAV1, which phosphorylates and activates LATS1/2 in complex with their regulatory protein, MOB1. This activation leads to the phosphorylation and inactivation of the YAP1 oncoprotein and WWTR1/TAZ. Phosphorylation of YAP1 by LATS1/2 prevents its nuclear translocation, thereby regulating the expression of its target genes. The transcriptional regulation of gene expression requires TEAD transcription factors and modulates cell growth, anchorage-independent growth, and induction of epithelial-mesenchymal transition (EMT). Plays a key role in tissue tension and 3D tissue shape by regulating the cortical actomyosin network, acting via ARHGAP18, a Rho GTPase activating protein that suppresses F-actin polymerization. It also suppresses ciliogenesis by acting as a transcriptional corepressor of TEAD4 target genes AURKA and PLK1. In conjunction with WWTR1, regulates TGFB1-dependent SMAD2 and SMAD3 nuclear accumulation. Synergizes with WBP2 to enhance PGR activity. In terms of biological role, attenuates p73-mediated cell death signaling in transcriptional repression-induced atypical death (TRIAD) of neurons. The protein is Transcriptional coactivator YAP1 (Yap1) of Rattus norvegicus (Rat).